The sequence spans 257 residues: Reticulon-like protein B4 (257 aa).

A disordered region spans residues 19-42 (IHGHGDSSSLSDSDDDKKSTSSSS). One can recognise a Reticulon domain in the interval 68 to 257 (PADIFLWRNK…PRGALNKKKD (190 aa)). A run of 3 helical transmembrane segments spans residues 78–98 (KVSG…ELFE), 99–119 (YHLL…LFLW), and 173–193 (FILV…YNFL).

Interacts with VirB2.

It localises to the endoplasmic reticulum membrane. Its function is as follows. Plays a role in the Agrobacterium-mediated plant transformation via its interaction with VirB2, the major component of the T-pilus. The chain is Reticulon-like protein B4 (RTNLB4) from Arabidopsis thaliana (Mouse-ear cress).